The chain runs to 702 residues: Polyribonucleotide nucleotidyltransferase (702 aa).

Mg(2+) contacts are provided by D493 and D499. One can recognise a KH domain in the interval 560-619; that stretch reads PRLLTMRIDPERIRDVIGKGGATIRGLTEETGTNIDISDEGVVTIASADKAAAEEAKKRI. Positions 629 to 697 constitute an S1 motif domain; it reads GKVYDGKVAK…RQGRIRLSMK (69 aa).

Belongs to the polyribonucleotide nucleotidyltransferase family. Component of the RNA degradosome, which is a multiprotein complex involved in RNA processing and mRNA degradation. Mg(2+) serves as cofactor.

Its subcellular location is the cytoplasm. The catalysed reaction is RNA(n+1) + phosphate = RNA(n) + a ribonucleoside 5'-diphosphate. Its function is as follows. Involved in mRNA degradation. Catalyzes the phosphorolysis of single-stranded polyribonucleotides processively in the 3'- to 5'-direction. This chain is Polyribonucleotide nucleotidyltransferase, found in Halorhodospira halophila (strain DSM 244 / SL1) (Ectothiorhodospira halophila (strain DSM 244 / SL1)).